We begin with the raw amino-acid sequence, 443 residues long: Tubulin beta chain (443 aa).

8 residues coordinate GTP: Q11, E69, S138, G142, T143, G144, N204, and N226. E69 contributes to the Mg(2+) binding site.

This sequence belongs to the tubulin family. As to quaternary structure, dimer of alpha and beta chains. A typical microtubule is a hollow water-filled tube with an outer diameter of 25 nm and an inner diameter of 15 nM. Alpha-beta heterodimers associate head-to-tail to form protofilaments running lengthwise along the microtubule wall with the beta-tubulin subunit facing the microtubule plus end conferring a structural polarity. Microtubules usually have 13 protofilaments but different protofilament numbers can be found in some organisms and specialized cells. Requires Mg(2+) as cofactor.

It is found in the cytoplasm. Its subcellular location is the cytoskeleton. In terms of biological role, tubulin is the major constituent of microtubules, a cylinder consisting of laterally associated linear protofilaments composed of alpha- and beta-tubulin heterodimers. Microtubules grow by the addition of GTP-tubulin dimers to the microtubule end, where a stabilizing cap forms. Below the cap, tubulin dimers are in GDP-bound state, owing to GTPase activity of alpha-tubulin. This is Tubulin beta chain from Thalassiosira weissflogii (Marine diatom).